The chain runs to 599 residues: Laccase-2 (599 aa).

An N-terminal signal peptide occupies residues 1-19; it reads MARSTTSLFALSLVASAFA. Plastocyanin-like domains lie at 21–145 and 157–307; these read VVDY…IVIY and VDDE…LVYE. Histidine 82, histidine 84, histidine 127, and histidine 129 together coordinate Cu cation. Cysteine 103 and cysteine 588 form a disulfide bridge. N-linked (GlcNAc...) asparagine glycans are attached at residues asparagine 207, asparagine 208, asparagine 231, asparagine 397, and asparagine 443. The Plastocyanin-like 3 domain maps to 450 to 567; sequence DVPTLLKILT…EGFAMVFAEA (118 aa). Residues histidine 497, histidine 500, histidine 502, histidine 549, cysteine 550, histidine 551, and histidine 555 each contribute to the Cu cation site.

The protein belongs to the multicopper oxidase family. In terms of assembly, homodimer. Cu cation is required as a cofactor. As to expression, in mycelia, at a lower level than LCC4.

It is found in the secreted. The catalysed reaction is 4 hydroquinone + O2 = 4 benzosemiquinone + 2 H2O. Lignin degradation and detoxification of lignin-derived products. This is Laccase-2 (LCC2) from Thanatephorus cucumeris (Black scurf of potato).